We begin with the raw amino-acid sequence, 534 residues long: MMLPMMYIYRDPPLHYGLCIFLDVGAVNVFPIFLQMATWRPSENKVYLPPTPVSKVVATDSYVKRTSIFYHAGSSRLLAVGHPYYSVTKDNTKTNIPKVSAYQYRVFRVRLPDPNKFGLPDTNIYNPDQERLVWACVGLEVGRGQPLGAGLSGHPLFNRLDDTESSNLANNNVIEDSRDNISVDGKQTQLCIVGCTPAMGEHWTKGAVCKSTQVTTGDCPPLALINTPIEDGDMIDTGFGAMDFKVLQESKAEVPLDIVQSTCKYPDYLKMSADAYGDSMWFYLRREQLFARHYFNRAGKVGETIPAELYLKGSNGREPPPSSVYVATPSGSMITSEAQLFNKPYWLQRAQGHNNGICWGNQLFVTVVDTTRSTNMTISTATEQLSKYDARKINQYLRHVEEYELQFVFQLCKITLSAEVMAYLHNMNANLLEDWNIGLSPPVATSLEDKYRYVRSTAITCQREQPPTEKQDPLAKYKFWDVNLQDSFSTDLDQFPLGRKFLMQLGTRSKPAVATSKKRSAPTSTSTPAKRKRR.

The disordered stretch occupies residues 508-534 (RSKPAVATSKKRSAPTSTSTPAKRKRR).

The protein belongs to the papillomaviridae L1 protein family. Self-assembles into homopentamers. The capsid has an icosahedral symmetry and consists of 72 capsomers, with each capsomer being a pentamer of L1. Interacts with the minor capsid protein L2; this interaction is necessary for viral genome encapsidation. Interacts with protein E2; this interaction enhances E2-dependent replication and transcription activation.

It localises to the virion. The protein localises to the host nucleus. In terms of biological role, forms an icosahedral capsid with a T=7 symmetry and a 50 nm diameter. The capsid is composed of 72 pentamers linked to each other by disulfide bonds and associated with L2 proteins. Binds to heparan sulfate proteoglycans on cell surface of basal layer keratinocytes to provide initial virion attachment. This binding mediates a conformational change in the virus capsid that facilitates efficient infection. The virion enters the host cell via endocytosis. During virus trafficking, L1 protein dissociates from the viral DNA and the genomic DNA is released to the host nucleus. The virion assembly takes place within the cell nucleus. Encapsulates the genomic DNA together with protein L2. This is Major capsid protein L1 from Homo sapiens (Human).